The following is a 603-amino-acid chain: DNA mismatch repair protein MutL (603 aa).

The protein belongs to the DNA mismatch repair MutL/HexB family.

Its function is as follows. This protein is involved in the repair of mismatches in DNA. It is required for dam-dependent methyl-directed DNA mismatch repair. May act as a 'molecular matchmaker', a protein that promotes the formation of a stable complex between two or more DNA-binding proteins in an ATP-dependent manner without itself being part of a final effector complex. The polypeptide is DNA mismatch repair protein MutL (Bradyrhizobium diazoefficiens (strain JCM 10833 / BCRC 13528 / IAM 13628 / NBRC 14792 / USDA 110)).